A 500-amino-acid chain; its full sequence is Lysine--tRNA ligase (500 aa).

The Mg(2+) site is built by Glu411 and Glu418.

It belongs to the class-II aminoacyl-tRNA synthetase family. In terms of assembly, homodimer. The cofactor is Mg(2+).

It is found in the cytoplasm. It carries out the reaction tRNA(Lys) + L-lysine + ATP = L-lysyl-tRNA(Lys) + AMP + diphosphate. The protein is Lysine--tRNA ligase of Actinobacillus pleuropneumoniae serotype 5b (strain L20).